Consider the following 378-residue polypeptide: Dihydroorotate dehydrogenase (quinone) (378 aa).

FMN is bound by residues 77–81 (AGFDK) and Thr-101. Position 81 (Lys-81) interacts with substrate. 126-130 (NRMGF) is a substrate binding site. Residues Asn-158 and Asn-191 each contribute to the FMN site. Asn-191 contributes to the substrate binding site. Ser-194 functions as the Nucleophile in the catalytic mechanism. Asn-196 contacts substrate. Residues Lys-229 and Thr-257 each coordinate FMN. 258–259 (NT) lines the substrate pocket. FMN-binding positions include Gly-287, Gly-316, and 337–338 (YT).

The protein belongs to the dihydroorotate dehydrogenase family. Type 2 subfamily. As to quaternary structure, monomer. FMN is required as a cofactor.

Its subcellular location is the cell membrane. The catalysed reaction is (S)-dihydroorotate + a quinone = orotate + a quinol. Its pathway is pyrimidine metabolism; UMP biosynthesis via de novo pathway; orotate from (S)-dihydroorotate (quinone route): step 1/1. Its function is as follows. Catalyzes the conversion of dihydroorotate to orotate with quinone as electron acceptor. This is Dihydroorotate dehydrogenase (quinone) from Synechococcus sp. (strain ATCC 27144 / PCC 6301 / SAUG 1402/1) (Anacystis nidulans).